The chain runs to 336 residues: Ferrochelatase (336 aa).

Fe cation-binding residues include histidine 206 and glutamate 287.

This sequence belongs to the ferrochelatase family.

It is found in the cytoplasm. The enzyme catalyses heme b + 2 H(+) = protoporphyrin IX + Fe(2+). The protein operates within porphyrin-containing compound metabolism; protoheme biosynthesis; protoheme from protoporphyrin-IX: step 1/1. Functionally, catalyzes the ferrous insertion into protoporphyrin IX. In Neisseria meningitidis serogroup C / serotype 2a (strain ATCC 700532 / DSM 15464 / FAM18), this protein is Ferrochelatase.